The following is a 236-amino-acid chain: C-&gt;U-editing enzyme APOBEC-1 (236 aa).

A CMP/dCMP-type deaminase domain is found at 10-134; that stretch reads GDPTLRRRIE…QRNRQGLRDL (125 aa). Residue histidine 61 participates in Zn(2+) binding. Residue glutamate 63 is the Proton donor of the active site. The Zn(2+) site is built by cysteine 93 and cysteine 96.

This sequence belongs to the cytidine and deoxycytidylate deaminase family. In terms of assembly, homodimer. Interacts with A1CF; form an mRNA editing complex. Interacts with RBM47; form an mRNA editing complex. Found in a complex with CELF2/CUGBP2 and A1CF. Interacts with HNRPAB. Interacts with SYNCRIP. Zn(2+) is required as a cofactor.

Its subcellular location is the cytoplasm. It localises to the nucleus. The enzyme catalyses a cytidine in mRNA + H2O + H(+) = a uridine in mRNA + NH4(+). It carries out the reaction cytidine(6666) in apoB mRNA + H2O + H(+) = uridine(6666) in apoB mRNA + NH4(+). In terms of biological role, cytidine deaminase catalyzing the cytidine to uridine postranscriptional editing of a variety of mRNAs. Form complexes with cofactors that confer differential editing activity and selectivity. Responsible for the postranscriptional editing of a CAA codon for Gln to a UAA codon for stop in the apolipoprotein B mRNA. Also involved in CGA (Arg) to UGA (Stop) editing in the NF1 mRNA. May also play a role in the epigenetic regulation of gene expression by participating in DNA demethylation. The protein is C-&gt;U-editing enzyme APOBEC-1 of Pongo pygmaeus (Bornean orangutan).